Here is a 506-residue protein sequence, read N- to C-terminus: MSVEPPPELEEKAASEPEAGAMPEKRAGAQAAGSTWLQGFGRPSVYHAAIVIFLEFFAWGLLTTPMLTVLHETFSQHTFLMNGLIQGVKGLLSFLSAPLIGALSDVWGRKPFLLGTVFFTCFPIPLMRISPWWYFAMISVSGVFSVTFSVIFAYVADVTQEHERSTAYGWVSATFAASLVSSPAIGAYLSASYGDSLVVLVATVVALLDICFILVAVPESLPEKMRPVSWGAQISWKQADPFASLKKVGKDSTVLLICITVFLSYLPEAGQYSSFFLYLRQVIGFGSVKIAAFIAMVGILSIVAQTAFLSILMRSLGNKNTVLLGLGFQMLQLAWYGFGSQAWMMWAAGTVAAMSSITFPAISALVSRNAESDQQGVAQGIITGIRGLCNGLGPALYGFIFYMFHVELTELGPKLNSNNVPLQGAVIPGPPFLFGACIVLMSFLVALFIPEYSKASGVQKHSNSSSGSLTNTPERGSDEDIEPLLQDSSIWELSSFEEPGNQCTEL.

The tract at residues 1–25 (MSVEPPPELEEKAASEPEAGAMPEK) is disordered. At 1 to 49 (MSVEPPPELEEKAASEPEAGAMPEKRAGAQAAGSTWLQGFGRPSVYHAA) the chain is on the extracellular side. The chain crosses the membrane as a helical span at residues 50-70 (IVIFLEFFAWGLLTTPMLTVL). The Cytoplasmic portion of the chain corresponds to 71 to 82 (HETFSQHTFLMN). The chain crosses the membrane as a helical span at residues 83 to 103 (GLIQGVKGLLSFLSAPLIGAL). Residues 104 to 111 (SDVWGRKP) are Extracellular-facing. Residues 112–132 (FLLGTVFFTCFPIPLMRISPW) form a helical membrane-spanning segment. Topologically, residues 133–134 (WY) are cytoplasmic. The chain crosses the membrane as a helical span at residues 135–155 (FAMISVSGVFSVTFSVIFAYV). The Extracellular segment spans residues 156–168 (ADVTQEHERSTAY). Residues 169 to 189 (GWVSATFAASLVSSPAIGAYL) traverse the membrane as a helical segment. The Cytoplasmic segment spans residues 190–196 (SASYGDS). Residues 197-217 (LVVLVATVVALLDICFILVAV) traverse the membrane as a helical segment. Residues 218-255 (PESLPEKMRPVSWGAQISWKQADPFASLKKVGKDSTVL) are Extracellular-facing. Residues 256–276 (LICITVFLSYLPEAGQYSSFF) form a helical membrane-spanning segment. At 277–281 (LYLRQ) the chain is on the cytoplasmic side. The chain crosses the membrane as a helical span at residues 282–302 (VIGFGSVKIAAFIAMVGILSI). The Extracellular segment spans residues 303–319 (VAQTAFLSILMRSLGNK). The helical transmembrane segment at 320-340 (NTVLLGLGFQMLQLAWYGFGS) threads the bilayer. Q341 is a topological domain (cytoplasmic). A helical transmembrane segment spans residues 342–362 (AWMMWAAGTVAAMSSITFPAI). At 363–387 (SALVSRNAESDQQGVAQGIITGIRG) the chain is on the extracellular side. A helical transmembrane segment spans residues 388–408 (LCNGLGPALYGFIFYMFHVEL). The Cytoplasmic segment spans residues 409–428 (TELGPKLNSNNVPLQGAVIP). The chain crosses the membrane as a helical span at residues 429 to 449 (GPPFLFGACIVLMSFLVALFI). The Extracellular segment spans residues 450–506 (PEYSKASGVQKHSNSSSGSLTNTPERGSDEDIEPLLQDSSIWELSSFEEPGNQCTEL). The interval 457-481 (GVQKHSNSSSGSLTNTPERGSDEDI) is disordered. The segment covering 459–474 (QKHSNSSSGSLTNTPE) has biased composition (polar residues). N463 carries N-linked (GlcNAc...) asparagine glycosylation.

The protein belongs to the major facilitator superfamily.

It is found in the membrane. The protein is Hippocampus abundant transcript-like protein 1 of Homo sapiens (Human).